A 217-amino-acid polypeptide reads, in one-letter code: Peroxiredoxin Q, chloroplastic (217 aa).

The N-terminal 66 residues, 1-66 (MAFAASTACC…RRRAASTGIV (66 aa)), are a transit peptide targeting the chloroplast. Positions 70-217 (VSKGSVPPNF…GETLKIIQNL (148 aa)) constitute a Thioredoxin domain. Catalysis depends on C112, which acts as the Cysteine sulfenic acid (-SOH) intermediate. The cysteines at positions 112 and 117 are disulfide-linked.

Belongs to the peroxiredoxin family. BCP/PrxQ subfamily. As to quaternary structure, monomer.

It is found in the plastid. The protein localises to the chloroplast thylakoid lumen. It catalyses the reaction a hydroperoxide + [thioredoxin]-dithiol = an alcohol + [thioredoxin]-disulfide + H2O. In terms of biological role, thiol-specific peroxidase that catalyzes the reduction of hydrogen peroxide and organic hydroperoxides to water and alcohols, respectively. Plays a role in cell protection against oxidative stress by detoxifying peroxides. The protein is Peroxiredoxin Q, chloroplastic (PRX1) of Triticum aestivum (Wheat).